The sequence spans 440 residues: Argininosuccinate lyase (440 aa).

The protein belongs to the lyase 1 family. Argininosuccinate lyase subfamily.

It localises to the cytoplasm. The catalysed reaction is 2-(N(omega)-L-arginino)succinate = fumarate + L-arginine. It functions in the pathway amino-acid biosynthesis; L-arginine biosynthesis; L-arginine from L-ornithine and carbamoyl phosphate: step 3/3. The chain is Argininosuccinate lyase from Clostridium botulinum (strain Loch Maree / Type A3).